Here is a 188-residue protein sequence, read N- to C-terminus: ATP synthase subunit delta (188 aa).

The protein belongs to the ATPase delta chain family. In terms of assembly, F-type ATPases have 2 components, F(1) - the catalytic core - and F(0) - the membrane proton channel. F(1) has five subunits: alpha(3), beta(3), gamma(1), delta(1), epsilon(1). F(0) has three main subunits: a(1), b(2) and c(10-14). The alpha and beta chains form an alternating ring which encloses part of the gamma chain. F(1) is attached to F(0) by a central stalk formed by the gamma and epsilon chains, while a peripheral stalk is formed by the delta and b chains.

The protein localises to the cell inner membrane. Its function is as follows. F(1)F(0) ATP synthase produces ATP from ADP in the presence of a proton or sodium gradient. F-type ATPases consist of two structural domains, F(1) containing the extramembraneous catalytic core and F(0) containing the membrane proton channel, linked together by a central stalk and a peripheral stalk. During catalysis, ATP synthesis in the catalytic domain of F(1) is coupled via a rotary mechanism of the central stalk subunits to proton translocation. This protein is part of the stalk that links CF(0) to CF(1). It either transmits conformational changes from CF(0) to CF(1) or is implicated in proton conduction. This is ATP synthase subunit delta from Rhizobium rhizogenes (strain K84 / ATCC BAA-868) (Agrobacterium radiobacter).